A 721-amino-acid chain; its full sequence is 1,4-alpha-glucan branching enzyme GlgB (721 aa).

Asp400 acts as the Nucleophile in catalysis. The active-site Proton donor is the Glu453.

It belongs to the glycosyl hydrolase 13 family. GlgB subfamily. In terms of assembly, monomer.

It catalyses the reaction Transfers a segment of a (1-&gt;4)-alpha-D-glucan chain to a primary hydroxy group in a similar glucan chain.. The protein operates within glycan biosynthesis; glycogen biosynthesis. Catalyzes the formation of the alpha-1,6-glucosidic linkages in glycogen by scission of a 1,4-alpha-linked oligosaccharide from growing alpha-1,4-glucan chains and the subsequent attachment of the oligosaccharide to the alpha-1,6 position. The chain is 1,4-alpha-glucan branching enzyme GlgB from Chlamydia felis (strain Fe/C-56) (Chlamydophila felis).